Reading from the N-terminus, the 143-residue chain is Histone H2B.2, sperm (143 aa).

The disordered stretch occupies residues 1–49 (MPKSPSKSSPRKGSPRKGSPRKGSPKRGGKGAKRAGKGGRRNVVKRRRR). 5 consecutive short sequence motifs (SPKK motif) follow at residues 4–7 (SPSK), 9–12 (SPRK), 14–17 (SPRK), 19–22 (SPRK), and 24–27 (SPKR). The segment covering 9–49 (SPRKGSPRKGSPRKGSPKRGGKGAKRAGKGGRRNVVKRRRR) has biased composition (basic residues). Residues Ser14, Ser19, and Ser24 each carry the phosphoserine modification. Ser129 is a glycosylation site (O-linked (GlcNAc) serine). Residue Lys137 forms a Glycyl lysine isopeptide (Lys-Gly) (interchain with G-Cter in ubiquitin) linkage.

It belongs to the histone H2B family. The nucleosome is a histone octamer containing two molecules each of H2A, H2B, H3 and H4 assembled in one H3-H4 heterotetramer and two H2A-H2B heterodimers. The octamer wraps approximately 147 bp of DNA. Post-translationally, monoubiquitination of Lys-137 gives a specific tag for epigenetic transcriptional activation and is also prerequisite for histone H3 'Lys-4' and 'Lys-79' methylation. Phosphorylated on SPKK motifs 3, 4 and 5; which may regulate DNA binding. Dephosphorylated during maturation of spermatids to mature sperm and rephosphorylated at fertilization. In terms of processing, glcNAcylation at Ser-129 promotes monoubiquitination of Lys-137. It fluctuates in response to extracellular glucose, and associates with transcribed genes.

The protein resides in the nucleus. Its subcellular location is the chromosome. In terms of biological role, core component of nucleosome. Nucleosomes wrap and compact DNA into chromatin, limiting DNA accessibility to the cellular machineries which require DNA as a template. Histones thereby play a central role in transcription regulation, DNA repair, DNA replication and chromosomal stability. DNA accessibility is regulated via a complex set of post-translational modifications of histones, also called histone code, and nucleosome remodeling. The chain is Histone H2B.2, sperm from Psammechinus miliaris (Green sea urchin).